The primary structure comprises 396 residues: Chorismate synthase (396 aa).

Residues R41 and R47 each coordinate NADP(+). Residues 130–132 (RAS), G298, 313–317 (KPIPT), and R339 each bind FMN.

This sequence belongs to the chorismate synthase family. As to quaternary structure, homotetramer. It depends on FMNH2 as a cofactor.

The catalysed reaction is 5-O-(1-carboxyvinyl)-3-phosphoshikimate = chorismate + phosphate. Its pathway is metabolic intermediate biosynthesis; chorismate biosynthesis; chorismate from D-erythrose 4-phosphate and phosphoenolpyruvate: step 7/7. Its function is as follows. Catalyzes the anti-1,4-elimination of the C-3 phosphate and the C-6 proR hydrogen from 5-enolpyruvylshikimate-3-phosphate (EPSP) to yield chorismate, which is the branch point compound that serves as the starting substrate for the three terminal pathways of aromatic amino acid biosynthesis. This reaction introduces a second double bond into the aromatic ring system. This is Chorismate synthase from Syntrophomonas wolfei subsp. wolfei (strain DSM 2245B / Goettingen).